The following is a 479-amino-acid chain: NADH dehydrogenase [ubiquinone] flavoprotein 1, mitochondrial (479 aa).

103 to 112 contacts NADH; that stretch reads GRGGAGFPSG. FMN is bound at residue 216-264; the sequence is RGAGAYICGEETALIESIEGKQGKPRLKPPFPAMAGLYGCPTTVTNVET. [4Fe-4S] cluster is bound by residues Cys396, Cys399, Cys402, and Cys442.

This sequence belongs to the complex I 51 kDa subunit family. Complex I is composed of about 45 different subunits. This is a component of the flavoprotein-sulfur (FP) fragment of the enzyme. FMN serves as cofactor. [4Fe-4S] cluster is required as a cofactor.

The protein localises to the mitochondrion inner membrane. It carries out the reaction a ubiquinone + NADH + 5 H(+)(in) = a ubiquinol + NAD(+) + 4 H(+)(out). In terms of biological role, core subunit of the mitochondrial membrane respiratory chain NADH dehydrogenase (Complex I) that is believed to belong to the minimal assembly required for catalysis. Complex I functions in the transfer of electrons from NADH to the respiratory chain. The immediate electron acceptor for the enzyme is believed to be ubiquinone. This Dictyostelium discoideum (Social amoeba) protein is NADH dehydrogenase [ubiquinone] flavoprotein 1, mitochondrial (ndufv1).